The chain runs to 390 residues: Homoserine O-succinyltransferase (390 aa).

An AB hydrolase-1 domain is found at Asn59–Asp369. Ser165 functions as the Nucleophile in the catalytic mechanism. Arg235 contributes to the substrate binding site. Residues Asp330 and His363 contribute to the active site. Asp364 lines the substrate pocket.

This sequence belongs to the AB hydrolase superfamily. MetX family. As to quaternary structure, homodimer.

It localises to the cytoplasm. It carries out the reaction L-homoserine + succinyl-CoA = O-succinyl-L-homoserine + CoA. It functions in the pathway amino-acid biosynthesis; L-methionine biosynthesis via de novo pathway; O-succinyl-L-homoserine from L-homoserine: step 1/1. In terms of biological role, transfers a succinyl group from succinyl-CoA to L-homoserine, forming succinyl-L-homoserine. This Cupriavidus pinatubonensis (strain JMP 134 / LMG 1197) (Cupriavidus necator (strain JMP 134)) protein is Homoserine O-succinyltransferase.